The chain runs to 122 residues: Histone H2B (122 aa).

The segment at 1-31 is disordered; the sequence is MPPKPSGKGQKKAGKAKGAPSTNKKRKRKRK. Position 2 is a n,N-dimethylproline (Pro2). Gln10 is covalently cross-linked (Isoglutamyl lysine isopeptide (Gln-Lys) (interchain with K-5 in histone H4)). Ser109 carries O-linked (GlcNAc) serine glycosylation. Residue Lys117 forms a Glycyl lysine isopeptide (Lys-Gly) (interchain with G-Cter in ubiquitin) linkage.

This sequence belongs to the histone H2B family. In terms of assembly, the nucleosome is a histone octamer containing two molecules each of H2A, H2B, H3 and H4 assembled in one H3-H4 heterotetramer and two H2A-H2B heterodimers. The octamer wraps approximately 147 bp of DNA. Post-translationally, monoubiquitination of Lys-117 gives a specific tag for epigenetic transcriptional activation and is also prerequisite for histone H3 'Lys-4' and 'Lys-79' methylation. GlcNAcylation at Ser-109 promotes monoubiquitination of Lys-117. It fluctuates in response to extracellular glucose, and associates with transcribed genes.

It localises to the nucleus. Its subcellular location is the chromosome. Functionally, core component of nucleosome. Nucleosomes wrap and compact DNA into chromatin, limiting DNA accessibility to the cellular machineries which require DNA as a template. Histones thereby play a central role in transcription regulation, DNA repair, DNA replication and chromosomal stability. DNA accessibility is regulated via a complex set of post-translational modifications of histones, also called histone code, and nucleosome remodeling. The protein is Histone H2B of Patiria pectinifera (Starfish).